The chain runs to 188 residues: NADH-quinone oxidoreductase subunit B 1 (188 aa).

[4Fe-4S] cluster contacts are provided by Cys32, Cys33, Cys98, and Cys128. The disordered stretch occupies residues 153–188; the sequence is VGGVSRPDALASPADALPPRAADSLTAPPVRPPDPS. The span at 157-177 shows a compositional bias: low complexity; the sequence is SRPDALASPADALPPRAADSL.

Belongs to the complex I 20 kDa subunit family. NDH-1 is composed of 14 different subunits. Subunits NuoB, C, D, E, F, and G constitute the peripheral sector of the complex. Requires [4Fe-4S] cluster as cofactor.

The protein localises to the cell membrane. It carries out the reaction a quinone + NADH + 5 H(+)(in) = a quinol + NAD(+) + 4 H(+)(out). Its function is as follows. NDH-1 shuttles electrons from NADH, via FMN and iron-sulfur (Fe-S) centers, to quinones in the respiratory chain. The immediate electron acceptor for the enzyme in this species is believed to be a menaquinone. Couples the redox reaction to proton translocation (for every two electrons transferred, four hydrogen ions are translocated across the cytoplasmic membrane), and thus conserves the redox energy in a proton gradient. The chain is NADH-quinone oxidoreductase subunit B 1 (nuoB1) from Salinispora tropica (strain ATCC BAA-916 / DSM 44818 / JCM 13857 / NBRC 105044 / CNB-440).